Consider the following 116-residue polypeptide: Transcription elongation factor SPT4 homolog 2 (116 aa).

The C4-type zinc-finger motif lies at 19 to 39 (CLRCRLVKTYDQFRDAGCENC).

Belongs to the SPT4 family.

The protein resides in the nucleus. Functionally, may regulate transcription elongation by RNA polymerase II. May enhance transcriptional pausing at sites proximal to the promoter, which may in turn facilitate the assembly of an elongation competent RNA polymerase II complex. This chain is Transcription elongation factor SPT4 homolog 2, found in Arabidopsis thaliana (Mouse-ear cress).